Consider the following 431-residue polypeptide: Phosphoribosylamine--glycine ligase (431 aa).

The ATP-grasp domain maps to 107-315 (RWLMEEYKIP…LVEIGEEIVD (209 aa)). 134–193 (IDDFGRPVVVKPLGLTGGKGVKVVGYQLKDNEEAKAYAEELIKRDGKVLIEERTDGVEFT) is an ATP binding site. Mg(2+)-binding residues include glutamine 273, glutamate 285, and asparagine 287. Residues glutamine 273, glutamate 285, and asparagine 287 each coordinate Mn(2+).

This sequence belongs to the GARS family. The cofactor is Mg(2+). It depends on Mn(2+) as a cofactor.

It carries out the reaction 5-phospho-beta-D-ribosylamine + glycine + ATP = N(1)-(5-phospho-beta-D-ribosyl)glycinamide + ADP + phosphate + H(+). Its pathway is purine metabolism; IMP biosynthesis via de novo pathway; N(1)-(5-phospho-D-ribosyl)glycinamide from 5-phospho-alpha-D-ribose 1-diphosphate: step 2/2. The protein is Phosphoribosylamine--glycine ligase of Thermococcus kodakarensis (strain ATCC BAA-918 / JCM 12380 / KOD1) (Pyrococcus kodakaraensis (strain KOD1)).